A 251-amino-acid polypeptide reads, in one-letter code: Flagellar brake protein YcgR (251 aa).

Positions 127-239 constitute a PilZ domain; it reads QRRDGFRVRP…ASRTLQRYID (113 aa).

Belongs to the YcgR family. Monomer. Interacts with the flagellar basal bodies.

Its subcellular location is the bacterial flagellum basal body. Functionally, acts as a flagellar brake, regulating swimming and swarming in a bis-(3'-5') cyclic diguanylic acid (c-di-GMP)-dependent manner. Binds 1 c-di-GMP dimer per subunit. Increasing levels of c-di-GMP lead to decreased motility. This is Flagellar brake protein YcgR from Leptothrix cholodnii (strain ATCC 51168 / LMG 8142 / SP-6) (Leptothrix discophora (strain SP-6)).